A 119-amino-acid polypeptide reads, in one-letter code: C-C motif chemokine 24 (119 aa).

Positions 1–26 (MAGLATFVVSLLLVTLCAHCIDPAGS) are cleaved as a signal peptide. Intrachain disulfides connect cysteine 33–cysteine 58 and cysteine 34–cysteine 74. N-linked (GlcNAc...) asparagine glycans are attached at residues asparagine 54 and asparagine 115.

The protein belongs to the intercrine beta (chemokine CC) family.

It localises to the secreted. Chemotactic for resting T-lymphocytes, and eosinophils. Has lower chemotactic activity for neutrophils but none for monocytes and activated lymphocytes. Is a strong suppressor of colony formation by a multipotential hematopoietic progenitor cell line. Binds to CCR3. The chain is C-C motif chemokine 24 from Canis lupus familiaris (Dog).